Here is a 481-residue protein sequence, read N- to C-terminus: ATP synthase subunit beta (481 aa).

Residue 160–167 (GGAGVGKT) participates in ATP binding.

Belongs to the ATPase alpha/beta chains family. In terms of assembly, F-type ATPases have 2 components, CF(1) - the catalytic core - and CF(0) - the membrane proton channel. CF(1) has five subunits: alpha(3), beta(3), gamma(1), delta(1), epsilon(1). CF(0) has three main subunits: a(1), b(2) and c(9-12). The alpha and beta chains form an alternating ring which encloses part of the gamma chain. CF(1) is attached to CF(0) by a central stalk formed by the gamma and epsilon chains, while a peripheral stalk is formed by the delta and b chains.

Its subcellular location is the cell inner membrane. The enzyme catalyses ATP + H2O + 4 H(+)(in) = ADP + phosphate + 5 H(+)(out). Produces ATP from ADP in the presence of a proton gradient across the membrane. The catalytic sites are hosted primarily by the beta subunits. This is ATP synthase subunit beta from Anaeromyxobacter sp. (strain Fw109-5).